A 77-amino-acid chain; its full sequence is Cell division topological specificity factor (77 aa).

This sequence belongs to the MinE family.

In terms of biological role, prevents the cell division inhibition by proteins MinC and MinD at internal division sites while permitting inhibition at polar sites. This ensures cell division at the proper site by restricting the formation of a division septum at the midpoint of the long axis of the cell. This is Cell division topological specificity factor from Helicobacter pylori (strain Shi470).